Consider the following 547-residue polypeptide: Methionine--tRNA ligase (547 aa).

The 'HIGH' region signature appears at 13–23 (PYANGPLHIGH). C145, C148, C158, and C161 together coordinate Zn(2+). Positions 334–338 (QFSKS) match the 'KMSKS' region motif. Residue K337 coordinates ATP.

This sequence belongs to the class-I aminoacyl-tRNA synthetase family. MetG type 1 subfamily. The cofactor is Zn(2+).

The protein resides in the cytoplasm. It carries out the reaction tRNA(Met) + L-methionine + ATP = L-methionyl-tRNA(Met) + AMP + diphosphate. In terms of biological role, is required not only for elongation of protein synthesis but also for the initiation of all mRNA translation through initiator tRNA(fMet) aminoacylation. This Thermoplasma acidophilum (strain ATCC 25905 / DSM 1728 / JCM 9062 / NBRC 15155 / AMRC-C165) protein is Methionine--tRNA ligase.